The chain runs to 376 residues: Rhodopsin (376 aa).

Over 1 to 52 the chain is Extracellular; that stretch reads MSSWSNQPAMDDYGLPSSNPYGNFTVVDMAPKDILHMIHPHWYQYPPMNPMM. N23 carries an N-linked (GlcNAc...) asparagine glycan. A helical membrane pass occupies residues 53–77; the sequence is YPLLLIFMLFTGILCLAGNFVTIWV. Over 78-89 the chain is Cytoplasmic; sequence FMNTKSLRTPAN. A helical transmembrane segment spans residues 90–112; it reads LLVVNLAMSDFLMMFTMFPPMMV. The Extracellular portion of the chain corresponds to 113–126; the sequence is TCYYHTWTLGPTFC. C126 and C203 form a disulfide bridge. The chain crosses the membrane as a helical span at residues 127–149; it reads QVYAFLGNLCGCASIWTMVFITF. The short motif at 150–152 is the 'Ionic lock' involved in activated form stabilization element; that stretch reads DRY. Topologically, residues 150 to 168 are cytoplasmic; it reads DRYNVIVKGVAGEPLSTKK. Residues 169 to 189 form a helical membrane-spanning segment; it reads ASLWILTIWVLSITWCIAPFF. Residues 190–216 are Extracellular-facing; it reads GWNRYVPEGNLTGCGTDYLSEDILSRS. N199 carries N-linked (GlcNAc...) asparagine glycosylation. A helical membrane pass occupies residues 217–237; that stretch reads YLYDYSTWVYYLPLLPIYCYV. The Cytoplasmic portion of the chain corresponds to 238 to 278; that stretch reads SIIKAVAAHEKGMRDQAKKMGIKSLRNEEAQKTSAECRLAK. Residues 279-300 traverse the membrane as a helical segment; that stretch reads IAMTTVALWFIAWTPYLLINWV. Residues 301–311 are Extracellular-facing; that stretch reads GMFARSYLSPV. The chain crosses the membrane as a helical span at residues 312–333; it reads YTIWGYVFAKANAVYNPIVYAI. K321 carries the post-translational modification N6-(retinylidene)lysine. The Cytoplasmic segment spans residues 334-376; it reads SHPKYRAAMEKKLPCLSCKTESDDVSESASTTTSSAEEKAESA. The interval 353 to 376 is disordered; sequence TESDDVSESASTTTSSAEEKAESA.

Belongs to the G-protein coupled receptor 1 family. Opsin subfamily. As to quaternary structure, homodimer. Interacts with GNAQ. In terms of processing, contains one covalently linked retinal chromophore. Detected on rhabdomere membranes on photoreceptor cells in the retina (at protein level).

It is found in the cell projection. The protein resides in the rhabdomere membrane. In terms of biological role, photoreceptor required for image-forming vision at low light intensity. Can use both retinal and 3-dehydroretinal as visual pigment. Light-induced isomerization of 11-cis to all-trans retinal triggers a conformational change that activates signaling via G-proteins. Signaling via GNAQ probably mediates the activation of phospholipase C. This chain is Rhodopsin (RHO), found in Procambarus clarkii (Red swamp crayfish).